Reading from the N-terminus, the 107-residue chain is Iron-binding protein IscA (107 aa).

Residues cysteine 35, cysteine 99, and cysteine 101 each contribute to the Fe cation site.

This sequence belongs to the HesB/IscA family. As to quaternary structure, homodimer; may form tetramers and higher multimers. It depends on Fe cation as a cofactor.

Is able to transfer iron-sulfur clusters to apo-ferredoxin. Multiple cycles of [2Fe2S] cluster formation and transfer are observed, suggesting that IscA acts catalytically. Recruits intracellular free iron so as to provide iron for the assembly of transient iron-sulfur cluster in IscU in the presence of IscS, L-cysteine and the thioredoxin reductase system TrxA/TrxB. The protein is Iron-binding protein IscA of Proteus mirabilis (strain HI4320).